Here is a 398-residue protein sequence, read N- to C-terminus: MTYNKRLFTSESVTEGHPDKIADQVSDAILDEILKDDPNARVACETTVTTGMALISGEISTSTYVDIPKVVRETIKGIGYTRAKYGYDYQTMAVLTAIDEQSPDIAQGVDKALEYRNDISEEEIEATGAGDQGLMFGYATNETETYMPLPIFLSHQLAKRLSDVRKDGILNYLRPDGKVQVTVEYDESDKPKRIDTIVVSSQHADDIELEQIQSDIKEHVIYPTVPEGLIDNETKFFINPTGRFVIGGPQGDAGLTGRKIIVDTYGGYARHGGGCFSGKDPTKVDRSAAYAARYVAKNIVAAGLADQCEVQLAYAIGVAEPVSISIDTFKTGKVSEAQLVEAVRANFDLRPAGIIKMLDLKHPIYKQTAAYGHFGRTDVLLPWEKLDKVNVLKDAVQA.

His17 serves as a coordination point for ATP. Position 19 (Asp19) interacts with Mg(2+). Glu45 is a K(+) binding site. Positions 58 and 101 each coordinate L-methionine. The segment at Gln101–Lys111 is flexible loop. ATP is bound by residues Asp176 to Lys178, Arg243 to Phe244, Asp252, Arg258 to Lys259, and Lys279. An L-methionine-binding site is contributed by Asp252. An L-methionine-binding site is contributed by Lys283.

This sequence belongs to the AdoMet synthase family. As to quaternary structure, homotetramer; dimer of dimers. It depends on Mg(2+) as a cofactor. Requires K(+) as cofactor.

It localises to the cytoplasm. The catalysed reaction is L-methionine + ATP + H2O = S-adenosyl-L-methionine + phosphate + diphosphate. Its pathway is amino-acid biosynthesis; S-adenosyl-L-methionine biosynthesis; S-adenosyl-L-methionine from L-methionine: step 1/1. Functionally, catalyzes the formation of S-adenosylmethionine (AdoMet) from methionine and ATP. The overall synthetic reaction is composed of two sequential steps, AdoMet formation and the subsequent tripolyphosphate hydrolysis which occurs prior to release of AdoMet from the enzyme. The protein is S-adenosylmethionine synthase of Staphylococcus haemolyticus (strain JCSC1435).